Here is a 684-residue protein sequence, read N- to C-terminus: Cleavage and polyadenylation specificity factor subunit 3 (684 aa).

Residue Ser2 is modified to N-acetylserine. Residues His71, His73, Asp75, His76, His158, and Asp179 each contribute to the Zn(2+) site. His396 (proton donor) is an active-site residue. Residue His418 participates in Zn(2+) binding. Glycyl lysine isopeptide (Lys-Gly) (interchain with G-Cter in SUMO) cross-links involve residues Lys462, Lys465, and Lys545. Residue Ser659 is modified to Phosphoserine. Position 681 is a phosphothreonine (Thr681).

The protein belongs to the metallo-beta-lactamase superfamily. RNA-metabolizing metallo-beta-lactamase-like family. CPSF3 subfamily. Component of the cleavage and polyadenylation specificity factor (CPSF) complex, composed of CPSF1, CPSF2, CPSF3, CPSF4 and FIP1L1. Interacts with CPSF2, CSTF2 and SYMPK. Interacts with TUT1; the interaction is direct and mediates the recruitment of the CPSF complex on the 3'UTR of pre-mRNAs. Interacts with WDR33. Interacts with ZC3H3. Interacts with ISY1; this interaction is in an RNA independent manner. Interacts with the microprocessor complex subunits DGCR8 and DROSHA; this interaction is in an RNA dependent manner. It depends on Zn(2+) as a cofactor. In terms of processing, sumoylated on Lys-462, Lys-465 and Lys-545, preferentially by SUMO3.

The protein resides in the nucleus. In terms of biological role, component of the cleavage and polyadenylation specificity factor (CPSF) complex that plays a key role in pre-mRNA 3'-end formation, recognizing the AAUAAA signal sequence and interacting with poly(A) polymerase and other factors to bring about cleavage and poly(A) addition. Has endonuclease activity, and functions as an mRNA 3'-end-processing endonuclease. Also involved in the histone 3'-end pre-mRNA processing. U7 snRNP-dependent protein that induces both the 3' endoribonucleolytic cleavage of histone pre-mRNAs and acts as a 5' to 3' exonuclease for degrading the subsequent downstream cleavage product (DCP) of mature histone mRNAs. Cleavage occurs after the 5'-ACCCA-3' sequence in the histone pre-mRNA leaving a 3'hydroxyl group on the upstream fragment containing the stem loop (SL) and 5' phosphate on the downstream cleavage product (DCP) starting with CU nucleotides. The U7-dependent 5' to 3' exonuclease activity is processive and degrades the DCP RNA substrate even after complete removal of the U7-binding site. Binds to the downstream cleavage product (DCP) of histone pre-mRNAs and the cleaved DCP RNA substrate in a U7 snRNP dependent manner. Required for the selective processing of microRNAs (miRNAs) during embryonic stem cell differentiation via its interaction with ISY1. Required for entering/progressing through S-phase of the cell cycle. Required for the biogenesis of all miRNAs from the pri-miR-17-92 primary transcript except miR-92a. Only required for the biogenesis of miR-290 and miR-96 from the pri-miR-290-295 and pri-miR-96-183 primary transcripts, respectively. This Mus musculus (Mouse) protein is Cleavage and polyadenylation specificity factor subunit 3 (Cpsf3).